A 244-amino-acid polypeptide reads, in one-letter code: 1-(5-phosphoribosyl)-5-[(5-phosphoribosylamino)methylideneamino] imidazole-4-carboxamide isomerase (244 aa).

Aspartate 8 acts as the Proton acceptor in catalysis. The Proton donor role is filled by aspartate 129.

It belongs to the HisA/HisF family.

It localises to the cytoplasm. It carries out the reaction 1-(5-phospho-beta-D-ribosyl)-5-[(5-phospho-beta-D-ribosylamino)methylideneamino]imidazole-4-carboxamide = 5-[(5-phospho-1-deoxy-D-ribulos-1-ylimino)methylamino]-1-(5-phospho-beta-D-ribosyl)imidazole-4-carboxamide. Its pathway is amino-acid biosynthesis; L-histidine biosynthesis; L-histidine from 5-phospho-alpha-D-ribose 1-diphosphate: step 4/9. This Geobacter sulfurreducens (strain ATCC 51573 / DSM 12127 / PCA) protein is 1-(5-phosphoribosyl)-5-[(5-phosphoribosylamino)methylideneamino] imidazole-4-carboxamide isomerase.